Reading from the N-terminus, the 339-residue chain is Putative P2Y purinoceptor 10 (339 aa).

The Extracellular segment spans residues M1 to T39. N16 and N26 each carry an N-linked (GlcNAc...) asparagine glycan. Residues T40 to C60 form a helical membrane-spanning segment. Topologically, residues R61–K68 are cytoplasmic. Residues A69–L89 form a helical membrane-spanning segment. Residues R90–R103 are Extracellular-facing. The helical transmembrane segment at A104 to L124 threads the bilayer. A disulfide bridge links C106 with C181. Topologically, residues T125–D149 are cytoplasmic. A helical transmembrane segment spans residues V150 to L170. Residues R171–V193 are Extracellular-facing. N178 is a glycosylation site (N-linked (GlcNAc...) asparagine). The helical transmembrane segment at A194–I214 threads the bilayer. Over A215–M244 the chain is Cytoplasmic. Residues V245 to F265 traverse the membrane as a helical segment. At Y266–P288 the chain is on the extracellular side. A helical membrane pass occupies residues F289 to A309. Over S310–G339 the chain is Cytoplasmic.

Belongs to the G-protein coupled receptor 1 family. As to expression, weakly expressed in blood leukocytes.

The protein localises to the cell membrane. Functionally, putative receptor for purines coupled to G-proteins. The polypeptide is Putative P2Y purinoceptor 10 (P2RY10) (Homo sapiens (Human)).